The chain runs to 583 residues: Interactor of constitutive active ROPs 2, chloroplastic (583 aa).

A chloroplast-targeting transit peptide spans 1–55; sequence MQTPKPRPGSLEVPQKKSPASTPKTARKLKTSESDPVSSPNTKIRTPKTQSPKVV. 2 disordered regions span residues 1–80 and 101–125; these read MQTP…PELA and EALK…NASE. Positions 34-52 are enriched in polar residues; it reads SDPVSSPNTKIRTPKTQSP. Coiled-coil stretches lie at residues 74–207 and 238–516; these read GKTP…DAKE and MKMS…AAAT. Basic and acidic residues predominate over residues 102–115; it reads ALKKEAQDQAEETK. Residues 518–583 form a disordered region; it reads LSGGNNNNNS…IGVLLKKSQK (66 aa). The segment covering 519 to 529 has biased composition (low complexity); that stretch reads SGGNNNNNSNG. A Phosphoserine modification is found at S540.

The protein belongs to the ICR family. Interacts with ARAC8, ARAC11 and KIN13A in vitro, but not with ICR1 or SEC3A.

It is found in the plastid. The protein resides in the chloroplast. In terms of biological role, acts as a scaffold, mediating interaction of ROPs with different proteins. The polypeptide is Interactor of constitutive active ROPs 2, chloroplastic (ICR2) (Arabidopsis thaliana (Mouse-ear cress)).